We begin with the raw amino-acid sequence, 361 residues long: 3-dehydroquinate synthase (361 aa).

It belongs to the archaeal-type DHQ synthase family.

The catalysed reaction is 2-amino-2,3,7-trideoxy-D-lyxo-hept-6-ulosonate + NAD(+) + H2O = 3-dehydroquinate + NH4(+) + NADH + H(+). Catalyzes the oxidative deamination and cyclization of 2-amino-3,7-dideoxy-D-threo-hept-6-ulosonic acid (ADH) to yield 3-dehydroquinate (DHQ), which is fed into the canonical shikimic pathway of aromatic amino acid biosynthesis. The polypeptide is 3-dehydroquinate synthase (aroB') (Methanocaldococcus jannaschii (strain ATCC 43067 / DSM 2661 / JAL-1 / JCM 10045 / NBRC 100440) (Methanococcus jannaschii)).